Consider the following 157-residue polypeptide: Transcriptional repressor NrdR (157 aa).

Residues 3-34 fold into a zinc finger; that stretch reads CPFCNTVDTKVIDSRLVSEGSQIKRRRQCAIC. Positions 49–139 constitute an ATP-cone domain; that stretch reads PRVIKNDDLL…VYRSFEDVRE (91 aa).

This sequence belongs to the NrdR family. Requires Zn(2+) as cofactor.

Functionally, negatively regulates transcription of bacterial ribonucleotide reductase nrd genes and operons by binding to NrdR-boxes. The chain is Transcriptional repressor NrdR from Hamiltonella defensa subsp. Acyrthosiphon pisum (strain 5AT).